The chain runs to 137 residues: Large ribosomal subunit protein bL17 (137 aa).

Belongs to the bacterial ribosomal protein bL17 family. Part of the 50S ribosomal subunit. Contacts protein L32.

The sequence is that of Large ribosomal subunit protein bL17 from Rickettsia typhi (strain ATCC VR-144 / Wilmington).